Here is a 168-residue protein sequence, read N- to C-terminus: Protein-export protein SecB (168 aa).

Positions 1-21 (MADQPSGNNDAKQAETNGNTV) are disordered.

It belongs to the SecB family. In terms of assembly, homotetramer, a dimer of dimers. One homotetramer interacts with 1 SecA dimer.

It localises to the cytoplasm. One of the proteins required for the normal export of preproteins out of the cell cytoplasm. It is a molecular chaperone that binds to a subset of precursor proteins, maintaining them in a translocation-competent state. It also specifically binds to its receptor SecA. In Chelativorans sp. (strain BNC1), this protein is Protein-export protein SecB.